The sequence spans 361 residues: MRFSDNLAKILDKYENLGNKLSSGIMGDEFVKASKEYAELEDVVAKIKEYNKAKSELEEANNFKLEVGLDNATLEMIEDEIHTLENSLPKLERAVKIALLPKDDADSKSAIIEVRAGSGGEEAALFAAVLFNMYQRYAELKGWRFEILAISDTGIGGYKEASASIKGKDVFSKLKFESGVHRVQRVPETESQGRIHTSAATVAVLPEAEEVDIQIEDKDLRIDTYRASGAGGQHVNTTDSAVRITHIPTGITVALQDEKSQHKNKAKALKILRARIYEEERRKKEQERADSRRGQVGSGDRSERIRTYNFPQGRVSDHRINLTLYKIDEVVKNGQLDEFVEALIADDEAKKLLGIYSKNTA.

Gln233 carries the N5-methylglutamine modification. Residues Glu280–Arg293 are compositionally biased toward basic and acidic residues. The disordered stretch occupies residues Glu280–Thr307.

Belongs to the prokaryotic/mitochondrial release factor family. In terms of processing, methylated by PrmC. Methylation increases the termination efficiency of RF1.

The protein localises to the cytoplasm. Functionally, peptide chain release factor 1 directs the termination of translation in response to the peptide chain termination codons UAG and UAA. The polypeptide is Peptide chain release factor 1 (Rickettsia massiliae (strain Mtu5)).